The following is a 212-amino-acid chain: Cytochrome c biogenesis ATP-binding export protein CcmA (212 aa).

The 203-residue stretch at 7-209 folds into the ABC transporter domain; it reads LSLQNLSCQR…HLQKLNLAAY (203 aa). 39-46 lines the ATP pocket; it reads GHNGIGKT.

The protein belongs to the ABC transporter superfamily. CcmA exporter (TC 3.A.1.107) family. The complex is composed of two ATP-binding proteins (CcmA) and two transmembrane proteins (CcmB).

The protein resides in the cell inner membrane. The catalysed reaction is heme b(in) + ATP + H2O = heme b(out) + ADP + phosphate + H(+). In terms of biological role, part of the ABC transporter complex CcmAB involved in the biogenesis of c-type cytochromes; once thought to export heme, this seems not to be the case, but its exact role is uncertain. Responsible for energy coupling to the transport system. The sequence is that of Cytochrome c biogenesis ATP-binding export protein CcmA from Haemophilus influenzae (strain ATCC 51907 / DSM 11121 / KW20 / Rd).